The chain runs to 540 residues: NADH-ubiquinone oxidoreductase chain 4 (540 aa).

Helical transmembrane passes span 2–22, 35–55, 89–109, 118–138, 140–160, 172–192, 218–238, 248–268, 282–302, 310–330, 338–358, 376–396, 415–435, and 501–521; these read TIIAISIMNVVIGIAILGVIL, IFILGVQGILIVLSGIMLIGC, ISAIFIFLTIILILSCNLISI, QKFQIMLLLTEILIINFFAAT, LVQLYIVYEATLIPMVIMIGV, FQILIYTLIGSIFMLMSIGIL, LIFIGFFIGFAVKIPIAPLHL, PTAGSVLLAGILLKLGGYGYI, YFPIIGGICLISILYTGIATL, IVAYSSISHMNVIVLGLFSGV, IILMIGHGVVSGGLFLCIGVI, VMPIMAILFFLLVLGNIAFPI, IIIAFFSALSMIVTAIYSFWL, and VNIFEFTSISLMVIMMIIIGM.

It belongs to the complex I subunit 4 family.

It is found in the mitochondrion membrane. The catalysed reaction is a ubiquinone + NADH + 5 H(+)(in) = a ubiquinol + NAD(+) + 4 H(+)(out). Core subunit of the mitochondrial membrane respiratory chain NADH dehydrogenase (Complex I) that is believed to belong to the minimal assembly required for catalysis. Complex I functions in the transfer of electrons from NADH to the respiratory chain. The immediate electron acceptor for the enzyme is believed to be ubiquinone. The chain is NADH-ubiquinone oxidoreductase chain 4 (nad4) from Dictyostelium discoideum (Social amoeba).